An 89-amino-acid chain; its full sequence is Small ribosomal subunit protein uS15 (89 aa).

The protein belongs to the universal ribosomal protein uS15 family. In terms of assembly, part of the 30S ribosomal subunit. Forms a bridge to the 50S subunit in the 70S ribosome, contacting the 23S rRNA.

In terms of biological role, one of the primary rRNA binding proteins, it binds directly to 16S rRNA where it helps nucleate assembly of the platform of the 30S subunit by binding and bridging several RNA helices of the 16S rRNA. Its function is as follows. Forms an intersubunit bridge (bridge B4) with the 23S rRNA of the 50S subunit in the ribosome. This Synechocystis sp. (strain ATCC 27184 / PCC 6803 / Kazusa) protein is Small ribosomal subunit protein uS15.